The primary structure comprises 466 residues: Putative outer membrane protein NMB0088 (466 aa).

The signal sequence occupies residues 1-24; sequence MTPSALKKTVLLLGTAFAAASVHA.

This sequence belongs to the OmpP1/FadL family.

It is found in the cell outer membrane. This Neisseria meningitidis serogroup B (strain ATCC BAA-335 / MC58) protein is Putative outer membrane protein NMB0088.